Consider the following 294-residue polypeptide: Cytidine deaminase (294 aa).

2 CMP/dCMP-type deaminase domains span residues 48 to 168 (DEDA…FGPK) and 186 to 294 (LTGD…VLLA). Residue 89 to 91 (NME) participates in substrate binding. Histidine 102 provides a ligand contact to Zn(2+). Glutamate 104 (proton donor) is an active-site residue. Residues cysteine 129 and cysteine 132 each coordinate Zn(2+).

Belongs to the cytidine and deoxycytidylate deaminase family. In terms of assembly, homodimer. Requires Zn(2+) as cofactor.

It catalyses the reaction cytidine + H2O + H(+) = uridine + NH4(+). The enzyme catalyses 2'-deoxycytidine + H2O + H(+) = 2'-deoxyuridine + NH4(+). Its function is as follows. This enzyme scavenges exogenous and endogenous cytidine and 2'-deoxycytidine for UMP synthesis. This chain is Cytidine deaminase, found in Shigella dysenteriae serotype 1 (strain Sd197).